Here is a 229-residue protein sequence, read N- to C-terminus: ATP synthase subunit a (229 aa).

6 helical membrane-spanning segments follow: residues 16 to 36, 81 to 101, 110 to 130, 142 to 162, 175 to 195, and 196 to 216; these read YAHVATLGIATVAAVGIGAAA, YIPFFASVFFFILFNNLLGMI, NMNTTFGFGVLMFLFYNFQGV, FMGPVIFLAPLMFVIEIVSHI, VMMGDHTVLSVFLDLVPIGVP, and IPFYVMGLFVCFVQAFVFTLL.

The protein belongs to the ATPase A chain family. As to quaternary structure, F-type ATPases have 2 components, CF(1) - the catalytic core - and CF(0) - the membrane proton channel. CF(1) has five subunits: alpha(3), beta(3), gamma(1), delta(1), epsilon(1). CF(0) has three main subunits: a(1), b(2) and c(9-12). The alpha and beta chains form an alternating ring which encloses part of the gamma chain. CF(1) is attached to CF(0) by a central stalk formed by the gamma and epsilon chains, while a peripheral stalk is formed by the delta and b chains.

The protein resides in the cell inner membrane. In terms of biological role, key component of the proton channel; it plays a direct role in the translocation of protons across the membrane. This chain is ATP synthase subunit a, found in Bdellovibrio bacteriovorus (strain ATCC 15356 / DSM 50701 / NCIMB 9529 / HD100).